The primary structure comprises 289 residues: Phosphatidylserine decarboxylase proenzyme (289 aa).

Residues D88, H145, and S251 each act as charge relay system; for autoendoproteolytic cleavage activity in the active site. Catalysis depends on S251, which acts as the Schiff-base intermediate with substrate; via pyruvic acid; for decarboxylase activity. S251 is modified (pyruvic acid (Ser); by autocatalysis).

Belongs to the phosphatidylserine decarboxylase family. PSD-B subfamily. Prokaryotic type I sub-subfamily. Heterodimer of a large membrane-associated beta subunit and a small pyruvoyl-containing alpha subunit. It depends on pyruvate as a cofactor. In terms of processing, is synthesized initially as an inactive proenzyme. Formation of the active enzyme involves a self-maturation process in which the active site pyruvoyl group is generated from an internal serine residue via an autocatalytic post-translational modification. Two non-identical subunits are generated from the proenzyme in this reaction, and the pyruvate is formed at the N-terminus of the alpha chain, which is derived from the carboxyl end of the proenzyme. The autoendoproteolytic cleavage occurs by a canonical serine protease mechanism, in which the side chain hydroxyl group of the serine supplies its oxygen atom to form the C-terminus of the beta chain, while the remainder of the serine residue undergoes an oxidative deamination to produce ammonia and the pyruvoyl prosthetic group on the alpha chain. During this reaction, the Ser that is part of the protease active site of the proenzyme becomes the pyruvoyl prosthetic group, which constitutes an essential element of the active site of the mature decarboxylase.

The protein localises to the cell membrane. The catalysed reaction is a 1,2-diacyl-sn-glycero-3-phospho-L-serine + H(+) = a 1,2-diacyl-sn-glycero-3-phosphoethanolamine + CO2. The protein operates within phospholipid metabolism; phosphatidylethanolamine biosynthesis; phosphatidylethanolamine from CDP-diacylglycerol: step 2/2. Its function is as follows. Catalyzes the formation of phosphatidylethanolamine (PtdEtn) from phosphatidylserine (PtdSer). The polypeptide is Phosphatidylserine decarboxylase proenzyme (Polaromonas naphthalenivorans (strain CJ2)).